The following is a 122-amino-acid chain: Large ribosomal subunit protein bL12 (122 aa).

This sequence belongs to the bacterial ribosomal protein bL12 family. Homodimer. Part of the ribosomal stalk of the 50S ribosomal subunit. Forms a multimeric L10(L12)X complex, where L10 forms an elongated spine to which 2 to 4 L12 dimers bind in a sequential fashion. Binds GTP-bound translation factors.

Forms part of the ribosomal stalk which helps the ribosome interact with GTP-bound translation factors. Is thus essential for accurate translation. The chain is Large ribosomal subunit protein bL12 from Xylella fastidiosa (strain 9a5c).